The sequence spans 335 residues: Glycerol-3-phosphate dehydrogenase [NAD(P)+] (335 aa).

NADPH contacts are provided by Ser-12, Trp-13, Arg-33, Arg-34, and Lys-107. The sn-glycerol 3-phosphate site is built by Lys-107, Gly-134, and Ser-136. Position 138 (Ala-138) interacts with NADPH. Residues Lys-189, Asp-242, Ser-252, Arg-253, and Asn-254 each coordinate sn-glycerol 3-phosphate. Lys-189 (proton acceptor) is an active-site residue. Arg-253 contacts NADPH. NADPH is bound by residues Val-277 and Glu-279.

Belongs to the NAD-dependent glycerol-3-phosphate dehydrogenase family.

The protein resides in the cytoplasm. The enzyme catalyses sn-glycerol 3-phosphate + NAD(+) = dihydroxyacetone phosphate + NADH + H(+). The catalysed reaction is sn-glycerol 3-phosphate + NADP(+) = dihydroxyacetone phosphate + NADPH + H(+). The protein operates within membrane lipid metabolism; glycerophospholipid metabolism. In terms of biological role, catalyzes the reduction of the glycolytic intermediate dihydroxyacetone phosphate (DHAP) to sn-glycerol 3-phosphate (G3P), the key precursor for phospholipid synthesis. The sequence is that of Glycerol-3-phosphate dehydrogenase [NAD(P)+] from Moorella thermoacetica (strain ATCC 39073 / JCM 9320).